The sequence spans 147 residues: Myoglobin (147 aa).

The Globin domain occupies 2 to 141 (ADHDLVLKCW…VIGDIDGYYK (140 aa)). A nitrite-binding site is contributed by His60. Position 60 (His60) interacts with O2. Heme b is bound at residue His89.

The protein belongs to the globin family. In terms of assembly, monomeric.

It is found in the cytoplasm. The protein localises to the sarcoplasm. It catalyses the reaction Fe(III)-heme b-[protein] + nitric oxide + H2O = Fe(II)-heme b-[protein] + nitrite + 2 H(+). The enzyme catalyses H2O2 + AH2 = A + 2 H2O. Its function is as follows. Monomeric heme protein which primary function is to store oxygen and facilitate its diffusion within muscle tissues. Reversibly binds oxygen through a pentacoordinated heme iron and enables its timely and efficient release as needed during periods of heightened demand. Depending on the oxidative conditions of tissues and cells, and in addition to its ability to bind oxygen, it also has a nitrite reductase activity whereby it regulates the production of bioactive nitric oxide. Under stress conditions, like hypoxia and anoxia, it also protects cells against reactive oxygen species thanks to its pseudoperoxidase activity. In Danio rerio (Zebrafish), this protein is Myoglobin (mb).